We begin with the raw amino-acid sequence, 586 residues long: uncharacterized protein (586 aa).

Disordered regions lie at residues 17–64 (VRRT…ETEE) and 80–123 (HSCS…GGAN). The segment covering 28 to 37 (PSTSGSIAWT) has biased composition (polar residues). 2 stretches are compositionally biased toward low complexity: residues 38-52 (SSESGSAHSSRVSSS) and 80-91 (HSCSAATTSQQS). A compositionally biased stretch (basic and acidic residues) spans 94–110 (QSKEHRIGGIKKEEKPI). Residues 112 to 123 (MGGGSSENGGAN) are compositionally biased toward gly residues. Helical transmembrane passes span 151-171 (WVILVIFMFLSGSNGAQWIQY), 191-211 (WTSMIYMLTYILFFIPAAWLL), 218-238 (LSVLLGALGNCVGAWIKLLST), 243-263 (FWVTFVGQTIVGASQMFTLGI), 283-303 (LGVFGNQLGIAVGFVLPPLIV), 317-337 (TLFLGSAVLNTSILALVICFF), 375-395 (FVILFITYGINTGVFYAISTL), 413-433 (YVGLLIVVAGMAGSVVGGFIL), 441-461 (LTTIMIYLFSFVGMLSFTLTI), 466-486 (MVLVFINAALLGFFMTGYLPI), 513-533 (IFGIALTWLMGIVMHGFGTFT), and 536-556 (IIMSSCLVVGTILTCFIREDL).

It belongs to the major facilitator superfamily. Feline leukemia virus subgroup C receptor (TC 2.A.1.28.1) family.

It localises to the membrane. This is an uncharacterized protein from Caenorhabditis elegans.